Reading from the N-terminus, the 70-residue chain is ATP synthase subunit c (70 aa).

A run of 2 helical transmembrane segments spans residues 3 to 23 (ALAA…IGIA) and 44 to 64 (LFFI…VIAI).

Belongs to the ATPase C chain family. As to quaternary structure, F-type ATPases have 2 components, F(1) - the catalytic core - and F(0) - the membrane proton channel. F(1) has five subunits: alpha(3), beta(3), gamma(1), delta(1), epsilon(1). F(0) has three main subunits: a(1), b(2) and c(10-14). The alpha and beta chains form an alternating ring which encloses part of the gamma chain. F(1) is attached to F(0) by a central stalk formed by the gamma and epsilon chains, while a peripheral stalk is formed by the delta and b chains.

Its subcellular location is the cell membrane. In terms of biological role, f(1)F(0) ATP synthase produces ATP from ADP in the presence of a proton or sodium gradient. F-type ATPases consist of two structural domains, F(1) containing the extramembraneous catalytic core and F(0) containing the membrane proton channel, linked together by a central stalk and a peripheral stalk. During catalysis, ATP synthesis in the catalytic domain of F(1) is coupled via a rotary mechanism of the central stalk subunits to proton translocation. Its function is as follows. Key component of the F(0) channel; it plays a direct role in translocation across the membrane. A homomeric c-ring of between 10-14 subunits forms the central stalk rotor element with the F(1) delta and epsilon subunits. In Caldicellulosiruptor saccharolyticus (strain ATCC 43494 / DSM 8903 / Tp8T 6331), this protein is ATP synthase subunit c.